A 247-amino-acid polypeptide reads, in one-letter code: Protein NipSnap homolog 3A (247 aa).

N6-acetyllysine is present on residues Lys-48 and Lys-166.

Belongs to the NipSnap family.

It is found in the cytoplasm. It localises to the cytosol. The polypeptide is Protein NipSnap homolog 3A (NIPSNAP3A) (Pongo abelii (Sumatran orangutan)).